Consider the following 110-residue polypeptide: UPF0060 membrane protein RSp1275 (110 aa).

The next 4 membrane-spanning stretches (helical) occupy residues 8-28 (FLFA…WLVL), 33-53 (SAWL…LLTL), 63-83 (AAYG…VDGA), and 90-110 (IGGA…PQPT).

Belongs to the UPF0060 family.

It localises to the cell inner membrane. This chain is UPF0060 membrane protein RSp1275, found in Ralstonia nicotianae (strain ATCC BAA-1114 / GMI1000) (Ralstonia solanacearum).